A 600-amino-acid polypeptide reads, in one-letter code: Zinc metalloproteinase-disintegrin-like cobrin (600 aa).

Positions 1–8 (MIQLSWSS) are cleaved as a signal peptide. Residues 9–179 (IILESGNVND…DEPIKKTSLL (171 aa)) constitute a propeptide that is removed on maturation. The Peptidase M12B domain occupies 193–388 (KYIEFYMVVD…DRPQCILNKP (196 aa)). Positions 196 and 280 each coordinate Ca(2+). 3 cysteine pairs are disulfide-bonded: cysteine 304–cysteine 383, cysteine 344–cysteine 367, and cysteine 346–cysteine 351. Positions 329, 333, and 339 each coordinate Zn(2+). Residues cysteine 383, asparagine 386, isoleucine 398, asparagine 401, phenylalanine 403, glutamate 405, glutamate 408, and aspartate 411 each contribute to the Ca(2+) site. The Disintegrin domain occupies 396–482 (PPICGNYFVE…ECPTDVFQRN (87 aa)). 14 disulfide bridges follow: cysteine 399/cysteine 428, cysteine 410/cysteine 423, cysteine 412/cysteine 418, cysteine 422/cysteine 445, cysteine 436/cysteine 442, cysteine 441/cysteine 467, cysteine 454/cysteine 474, cysteine 461/cysteine 492, cysteine 486/cysteine 497, cysteine 504/cysteine 554, cysteine 519/cysteine 562, cysteine 532/cysteine 542, cysteine 549/cysteine 588, and cysteine 582/cysteine 593. Asparagine 424 carries an N-linked (GlcNAc...) asparagine glycan. Positions 460 to 462 (DCD) match the D/ECD-tripeptide motif. Residues aspartate 462, leucine 463, glutamate 465, aspartate 477, and valine 478 each coordinate Ca(2+).

The protein belongs to the venom metalloproteinase (M12B) family. P-III subfamily. P-IIIa sub-subfamily. As to quaternary structure, monomer. It depends on Zn(2+) as a cofactor. As to expression, expressed by the venom gland.

It localises to the secreted. In terms of biological role, snake venom zinc metalloproteinase that may cleave complement protein C3 into C3c-like (C3o). The protein is Zinc metalloproteinase-disintegrin-like cobrin of Naja kaouthia (Monocled cobra).